The sequence spans 58 residues: UPF0391 membrane protein Sputcn32_1322 (58 aa).

A run of 2 helical transmembrane segments spans residues 6–26 (LMFL…IAGA) and 28–48 (AGIA…SLLV).

This sequence belongs to the UPF0391 family.

Its subcellular location is the cell membrane. The protein is UPF0391 membrane protein Sputcn32_1322 of Shewanella putrefaciens (strain CN-32 / ATCC BAA-453).